Consider the following 449-residue polypeptide: Exodeoxyribonuclease 7 large subunit (449 aa).

The protein belongs to the XseA family. As to quaternary structure, heterooligomer composed of large and small subunits.

It is found in the cytoplasm. The catalysed reaction is Exonucleolytic cleavage in either 5'- to 3'- or 3'- to 5'-direction to yield nucleoside 5'-phosphates.. Functionally, bidirectionally degrades single-stranded DNA into large acid-insoluble oligonucleotides, which are then degraded further into small acid-soluble oligonucleotides. This chain is Exodeoxyribonuclease 7 large subunit, found in Aliivibrio fischeri (strain ATCC 700601 / ES114) (Vibrio fischeri).